The sequence spans 339 residues: Uroporphyrinogen decarboxylase (339 aa).

Residues 23–27, aspartate 72, tyrosine 147, threonine 202, and histidine 315 contribute to the substrate site; that span reads RQAGR.

It belongs to the uroporphyrinogen decarboxylase family. In terms of assembly, homodimer.

It localises to the cytoplasm. It carries out the reaction uroporphyrinogen III + 4 H(+) = coproporphyrinogen III + 4 CO2. Its pathway is porphyrin-containing compound metabolism; protoporphyrin-IX biosynthesis; coproporphyrinogen-III from 5-aminolevulinate: step 4/4. In terms of biological role, catalyzes the decarboxylation of four acetate groups of uroporphyrinogen-III to yield coproporphyrinogen-III. This is Uroporphyrinogen decarboxylase from Geotalea daltonii (strain DSM 22248 / JCM 15807 / FRC-32) (Geobacter daltonii).